Consider the following 100-residue polypeptide: Urease subunit gamma (100 aa).

This sequence belongs to the urease gamma subunit family. Heterotrimer of UreA (gamma), UreB (beta) and UreC (alpha) subunits. Three heterotrimers associate to form the active enzyme.

It is found in the cytoplasm. The enzyme catalyses urea + 2 H2O + H(+) = hydrogencarbonate + 2 NH4(+). It functions in the pathway nitrogen metabolism; urea degradation; CO(2) and NH(3) from urea (urease route): step 1/1. The protein is Urease subunit gamma of Staphylococcus saprophyticus subsp. saprophyticus (strain ATCC 15305 / DSM 20229 / NCIMB 8711 / NCTC 7292 / S-41).